The chain runs to 218 residues: Probable 1-Cys peroxiredoxin (218 aa).

The Thioredoxin domain occupies 5 to 166 (WALGDLVPDI…VLRVLDSLQL (162 aa)). Catalysis depends on C47, which acts as the Cysteine sulfenic acid (-SOH) intermediate.

It belongs to the peroxiredoxin family. Prx6 subfamily.

The protein localises to the nucleus. Its subcellular location is the cytoplasm. It carries out the reaction a hydroperoxide + [thioredoxin]-dithiol = an alcohol + [thioredoxin]-disulfide + H2O. In terms of biological role, thiol-specific peroxidase that catalyzes the reduction of hydrogen peroxide and organic hydroperoxides to water and alcohols, respectively. Seems to contribute to the inhibition of germination during stress. Associated with the rehydration events involved in the recovery of the desiccation-tolerant moss. The sequence is that of Probable 1-Cys peroxiredoxin from Syntrichia ruralis (Great hairy screw-moss).